The primary structure comprises 726 residues: E3 SUMO-protein ligase SIZ2 (726 aa).

Residues 43–77 (MEQLKVLELKQICKSLDLSITGKKAVLQDRIKQFL) enclose the SAP domain. The 153-residue stretch at 139–291 (TALPPYSQQQ…SISCFIVEVF (153 aa)) folds into the PINIT domain. The SP-RING-type zinc finger occupies 323–408 (DDDDIITTST…IQNCNEDVEQ (86 aa)). Residues Cys-354, His-356, Cys-377, and Cys-380 each coordinate Zn(2+). Residues 507–533 (PSESEGSSDYNPNHTSTPKGSPTMDQD) are disordered. Residues 510–533 (SEGSSDYNPNHTSTPKGSPTMDQD) are compositionally biased toward polar residues.

This sequence belongs to the PIAS family. Interacts with CDC12. Autosumoylated upon ethanol stress.

It localises to the nucleus. Its pathway is protein modification; protein sumoylation. Functionally, may act as an E3 ligase mediating SUMO/Smt3 attachment to septins. May be involved in chromosome maintenance. This is E3 SUMO-protein ligase SIZ2 (NFI1) from Saccharomyces cerevisiae (strain ATCC 204508 / S288c) (Baker's yeast).